A 53-amino-acid chain; its full sequence is MEIFIEVFSHFLLQLTELTLNMCLELPTGSLEKSLMISSQVLQIPVANSTKQR.

ACC-6 forms a complex with MHC HLA-B*4403. Highly expressed in dendritic cells and primary leukemia cells, especially those of myeloid lineage. ACC-6 expression is limited to cells of the hematopoietic lineage.

Functionally, this splice variant of HMSD is the precursor of the histocompatibility antigen ACC-6. More generally, minor histocompatibility antigens (mHags) refer to immunogenic peptide which, when complexed with MHC, can generate an immune response after recognition by specific T-cells. The peptides are derived from polymorphic intracellular proteins, which are cleaved by normal pathways of antigen processing. The binding of these peptides to MHC class I or class II molecules and its expression on the cell surface can stimulate T-cell responses and thereby trigger graft rejection or graft-versus-host disease (GVHD) after hematopoietic stem cell transplantation from HLA-identical sibling donor. GVHD is a frequent complication after bone marrow transplantation (BMT), due to mismatch of minor histocompatibility antigen in HLA-matched sibling marrow transplants. However, associated with GVHD, a favorable graft-versus-leukemia (GVL) can be induced by donor-recipient disparities in mHags. ACC-6 is presented to the cell surface by MHC HLA-B*4403. This complex specifically elicits donor-cytotoxic T-lymphocyte (CTL) reactivity against hematologic malignancies after treatment by HLA-identical allogenic BMT. It induces cell recognition and lysis by CTL. Immunogenicity of most autosomal mHags results from single-nucleotide polymorphisms that cause amino-acid substitutions within epitopes, leading to the differential recognition of peptides between donor and recipient. The sequence is that of Minor histocompatibility protein HMSD variant form (HMSD) from Homo sapiens (Human).